We begin with the raw amino-acid sequence, 673 residues long: MALYGTLQLSHSLGLCRNQRFCNPENSAMRRRLHISNGPLSLGVPLGQHGFSNILLSNYLRRPICSVPCRTTAFRCHSFSASGKAIEPAVKAVTVVLTKSHGLMQQFPFVYKLVPAVALLVFSLWGLVPFARQGRNILLNKNDNGWKKSGTYHVMTSYVQPLLLWLGALFICRALDPVVLPTEASKIVKDRLLNFVRSLSTVLAFAYCLSSLIQQTQKLFSETSNPSDTRNMGFQFAGKALYSAVWVAAVSLFMELLGFSTQKWLTAGGLGTVLITLAGREILTNFLSSVMIHATRPFVLNEWIQTKIEGYEVSGTVEHVGWWSPTIIRGEDREAIHIPNHKFTVNVVRNLTQKTHWRIKTHLAISHLDVNKINNIVADMRKVLAKNPMVEQQRLHRRVFLENVIPENQALSILISCFVKTSHHEEYLGVKEAILLDLLRVISHHRARLATPIRTIRKMYTETDVENTPFGESMYGGVTSRRPLMLIEPAYKINGEDKSKSQNRAAKPTAEQENKGSNPKSKETSSPDLKANVKVGESPVSDTNKVPEETVAKPVIKAVSKPPTPKDTETSGTEKPKAKRSGGTIKSTKTDETDSSTSSASRSTLEENIVLGVALEGSKRTLPIEEEIHSPPMETDAKELTGARRSGGNGPLVADKEQKDSQSQPNSGASTEP.

The transit peptide at 1–75 (MALYGTLQLS…SVPCRTTAFR (75 aa)) directs the protein to the chloroplast. The next 5 helical transmembrane spans lie at 107 to 127 (FPFV…LWGL), 152 to 172 (YHVM…LFIC), 193 to 213 (LNFV…SSLI), 240 to 260 (ALYS…LGFS), and 264 to 284 (WLTA…EILT). The interval 492 to 673 (KINGEDKSKS…QPNSGASTEP (182 aa)) is disordered. 3 stretches are compositionally biased toward basic and acidic residues: residues 510–525 (AEQE…KETS), 564–576 (TPKD…TEKP), and 617–642 (GSKR…ELTG). The residue at position 571 (Ser-571) is a Phosphoserine. A compositionally biased stretch (polar residues) spans 661–673 (SQSQPNSGASTEP).

The protein belongs to the MscS (TC 1.A.23) family. As to expression, widely expressed.

The protein resides in the plastid. It localises to the chloroplast membrane. Its function is as follows. Mechanosensitive channel that opens in response to stretch forces in the membrane lipid bilayer. Controls plastid size, shape, and perhaps division during normal plant development by altering ion flux in response to changes in membrane tension. Acts as a component of the chloroplast division machinery. The chain is Mechanosensitive ion channel protein 2, chloroplastic (MSL2) from Arabidopsis thaliana (Mouse-ear cress).